Reading from the N-terminus, the 188-residue chain is Elongation factor P (188 aa).

N6-(3,6-diaminohexanoyl)-5-hydroxylysine is present on Lys34.

The protein belongs to the elongation factor P family. Post-translationally, may be beta-lysylated on the epsilon-amino group of Lys-34 by the combined action of EpmA and EpmB, and then hydroxylated on the C5 position of the same residue by EpmC (if this protein is present). Lysylation is critical for the stimulatory effect of EF-P on peptide-bond formation. The lysylation moiety may extend toward the peptidyltransferase center and stabilize the terminal 3-CCA end of the tRNA. Hydroxylation of the C5 position on Lys-34 may allow additional potential stabilizing hydrogen-bond interactions with the P-tRNA.

Its subcellular location is the cytoplasm. It functions in the pathway protein biosynthesis; polypeptide chain elongation. Functionally, involved in peptide bond synthesis. Alleviates ribosome stalling that occurs when 3 or more consecutive Pro residues or the sequence PPG is present in a protein, possibly by augmenting the peptidyl transferase activity of the ribosome. Modification of Lys-34 is required for alleviation. The chain is Elongation factor P from Stenotrophomonas maltophilia (strain K279a).